We begin with the raw amino-acid sequence, 588 residues long: Pescadillo homolog (588 aa).

Residues Pro-344–Pro-437 enclose the BRCT domain. Disordered stretches follow at residues Ser-446–Glu-533 and Lys-559–Lys-588. Residues Asp-460–Glu-493 are compositionally biased toward acidic residues. Basic and acidic residues-rich tracts occupy residues Ser-510–Ser-519 and Lys-576–Lys-588. The stretch at Ile-512–Lys-588 forms a coiled coil.

The protein belongs to the pescadillo family. Component of the NOP7 complex, composed of ERB1, NOP7 and YTM1. The complex is held together by ERB1, which interacts with NOP7 via its N-terminal domain and with YTM1 via a high-affinity interaction between the seven-bladed beta-propeller domains of the 2 proteins. The NOP7 complex associates with the 66S pre-ribosome.

It localises to the nucleus. Its subcellular location is the nucleolus. The protein localises to the nucleoplasm. In terms of biological role, component of the NOP7 complex, which is required for maturation of the 25S and 5.8S ribosomal RNAs and formation of the 60S ribosome. The chain is Pescadillo homolog from Vanderwaltozyma polyspora (strain ATCC 22028 / DSM 70294 / BCRC 21397 / CBS 2163 / NBRC 10782 / NRRL Y-8283 / UCD 57-17) (Kluyveromyces polysporus).